Consider the following 179-residue polypeptide: Large ribosomal subunit protein uL5 (179 aa).

It belongs to the universal ribosomal protein uL5 family. Part of the 50S ribosomal subunit; part of the 5S rRNA/L5/L18/L25 subcomplex. Contacts the 5S rRNA and the P site tRNA. Forms a bridge to the 30S subunit in the 70S ribosome.

Its function is as follows. This is one of the proteins that bind and probably mediate the attachment of the 5S RNA into the large ribosomal subunit, where it forms part of the central protuberance. In the 70S ribosome it contacts protein S13 of the 30S subunit (bridge B1b), connecting the 2 subunits; this bridge is implicated in subunit movement. Contacts the P site tRNA; the 5S rRNA and some of its associated proteins might help stabilize positioning of ribosome-bound tRNAs. In Edwardsiella ictaluri (strain 93-146), this protein is Large ribosomal subunit protein uL5.